Here is a 624-residue protein sequence, read N- to C-terminus: Phosphomethylpyrimidine synthase (624 aa).

Residues 75-99 are disordered; sequence SPWIESRGDTESYTGRTPFALDDGL. Residues asparagine 226, methionine 255, tyrosine 284, histidine 320, 340-342, 381-384, and glutamate 420 each bind substrate; these read SRG and DGLR. Histidine 424 contacts Zn(2+). Substrate is bound at residue tyrosine 447. Zn(2+) is bound at residue histidine 488. [4Fe-4S] cluster-binding residues include cysteine 568, cysteine 571, and cysteine 576.

It belongs to the ThiC family. As to quaternary structure, homodimer. The cofactor is [4Fe-4S] cluster.

The enzyme catalyses 5-amino-1-(5-phospho-beta-D-ribosyl)imidazole + S-adenosyl-L-methionine = 4-amino-2-methyl-5-(phosphooxymethyl)pyrimidine + CO + 5'-deoxyadenosine + formate + L-methionine + 3 H(+). It participates in cofactor biosynthesis; thiamine diphosphate biosynthesis. In terms of biological role, catalyzes the synthesis of the hydroxymethylpyrimidine phosphate (HMP-P) moiety of thiamine from aminoimidazole ribotide (AIR) in a radical S-adenosyl-L-methionine (SAM)-dependent reaction. The polypeptide is Phosphomethylpyrimidine synthase (Albidiferax ferrireducens (strain ATCC BAA-621 / DSM 15236 / T118) (Rhodoferax ferrireducens)).